A 266-amino-acid chain; its full sequence is UPF0294 protein YafD (266 aa).

This sequence belongs to the UPF0294 family.

The protein localises to the cytoplasm. This Salmonella newport (strain SL254) protein is UPF0294 protein YafD.